The primary structure comprises 990 residues: Fibronectin-binding protein A (990 aa).

Positions 1 to 35 are cleaved as a signal peptide; the sequence is MKNNLRYGIRKHKLGAASVFLGTMIVVGMGQDKEA. A YSIRK-G/S signaling motif motif is present at residues 7–18; that stretch reads YGIRKHKLGAAS. Disordered stretches follow at residues 33–61 and 96–193; these read KEAATSEQKTTTVEENGNSATDNKVSETQ and PKAV…TEVK. The span at 37–55 shows a compositional bias: polar residues; sequence TSEQKTTTVEENGNSATDN. Residues 37–511 form a ligand-binding A region region; the sequence is TSEQKTTTVE…SNKADGNGKN (475 aa). Composition is skewed to basic and acidic residues over residues 112 to 126 and 179 to 193; these read TVKEEVVKEEEKPQV and DVAEAKEASDVTEVK. The tract at residues 194 to 511 is fibrinogen/elastin/tropoelastin-binding; sequence GTDVTSKVTV…SNKADGNGKN (318 aa). The segment at 512 to 834 is fibronectin-binding; that stretch reads GQIIQNNDFE…EGQQTIEEDT (323 aa). The stretch at 545–574 is one B-1 repeat; the sequence is ENQDNTPLDIDYHTAIDGEGGYADGYIETI. Positions 545-604 are 2 X approximate tandem repeats; it reads ENQDNTPLDIDYHTAIDGEGGYADGYIETIEETDSSAIDIDYHTAVDSEAGHVGGYTESS. A B-2 repeat occupies 575-604; sequence EETDSSAIDIDYHTAVDSEAGHVGGYTESS. A disordered region spans residues 702 to 969; it reads LGYEGGQNSG…EESTNKGMLF (268 aa). The D-1 repeat unit spans residues 707 to 744; that stretch reads GQNSGNQSFEEDTEEDKPKYEQGGNIVDIDFDSVPQIQ. A 4 X approximate tandem repeats region spans residues 707-850; the sequence is GQNSGNQSFE…TPEVPSEPET (144 aa). Polar residues predominate over residues 741-752; it reads PQIQGQNNGNQS. The D-2 repeat unit spans residues 745 to 782; the sequence is GQNNGNQSFEEDTEKDKPKYEQGGNIIDIDFDSVPQIH. One copy of the D-3 repeat lies at 783-821; sequence GFNKHNEIIEEDTNKDKPNYQFGGHNSVDFEEDTLPKVS. A compositionally biased stretch (basic and acidic residues) spans 786-800; sequence KHNEIIEEDTNKDKP. A D-4; truncated repeat occupies 822–850; sequence GQNEGQQTIEEDTTPPTPPTPEVPSEPET. Positions 836–910 are enriched in pro residues; that stretch reads PPTPPTPEVP…PAEPGKPVPP (75 aa). 5 WR repeats span residues 851-864, 865-878, 879-892, 893-906, and 907-920; these read PTPPTPEVPSEPET, PTPPTPEVPAEPGK, and PVPPAEEEPKKPSK. A 5 X tandem repeats, Pro-rich (WR) region spans residues 851 to 920; the sequence is PTPPTPEVPS…AEEEPKKPSK (70 aa). The LPXTG sorting signal motif lies at 954–958; sequence LPETG. T957 carries the pentaglycyl murein peptidoglycan amidated threonine modification. The propeptide at 958–990 is removed by sortase; that stretch reads GGEESTNKGMLFGGLFSILGLALLRRNKKNHKA.

The protein resides in the secreted. It localises to the cell wall. Functionally, promotes bacterial attachment to multiple substrates, such as fibronectin (Fn), fibrinogen (Fg), elastin peptides and tropoelastin. This confers to S.aureus the ability to invade endothelial cells. Promotes adherence to and aggregation of activated platelets. This chain is Fibronectin-binding protein A (fnbA), found in Staphylococcus aureus (strain bovine RF122 / ET3-1).